Here is a 336-residue protein sequence, read N- to C-terminus: UPF0104 membrane protein MJ1595 (336 aa).

The next 9 helical transmembrane spans lie at 9 to 29 (STILLIISFLFILAIMAYIGL), 40 to 60 (NPEYVILAFILQILVSVILSA), 68 to 88 (ILGYSANFKNIFLLVLMGLFI), 127 to 147 (VLDTAIFLFFTLFVIGYFVVT), 154 to 174 (YLILSWIFLFSLTAIIIYLIA), 223 to 243 (WEVVVAIFLSVMRYIFDILKL), 245 to 265 (LLFLSLSYVVSVICVSAVYLI), 285 to 305 (VMILSFSAFNIPPSVAAAVTL), and 306 to 326 (LDRLVSYILPTILGYIAMLII).

Belongs to the UPF0104 family.

It is found in the cell membrane. This is UPF0104 membrane protein MJ1595 from Methanocaldococcus jannaschii (strain ATCC 43067 / DSM 2661 / JAL-1 / JCM 10045 / NBRC 100440) (Methanococcus jannaschii).